A 188-amino-acid polypeptide reads, in one-letter code: Protein TIFY 9 (188 aa).

The interval D20–G41 is disordered. The span at S28–S38 shows a compositional bias: low complexity. Residues A80 to E114 enclose the Tify domain. Residues P135–Q160 carry the Jas motif. Positions L156–S188 are disordered. A compositionally biased stretch (basic and acidic residues) spans L179 to S188.

The protein belongs to the TIFY/JAZ family. In terms of processing, ubiquitinated. Targeted for degradation by the SCF(COI1) E3 ubiquitin ligase-proteasome pathway during jasmonate signaling.

Its function is as follows. Repressor of jasmonate responses. The sequence is that of Protein TIFY 9 from Oryza sativa subsp. indica (Rice).